Reading from the N-terminus, the 854-residue chain is Glucans biosynthesis glucosyltransferase H (854 aa).

Helical transmembrane passes span 155 to 175 (ILLVLTLFQTAIATWYMKTIL), 209 to 229 (ILVLFAVLFCWVSAGFWTALM), 528 to 548 (VFLTGVMSYLSAPLWFMFLML), 583 to 603 (IALFSTTLVLLFLPKLLSVIL), 619 to 639 (FISLLLEMLFSVLLAPVRMLF), 671 to 691 (FVRHGSQLILGLVWAIGMAWL), and 695 to 715 (FLWWLAPIVFSLILSPFVSVY).

The protein belongs to the glycosyltransferase 2 family. OpgH subfamily.

The protein resides in the cell inner membrane. It participates in glycan metabolism; osmoregulated periplasmic glucan (OPG) biosynthesis. Its function is as follows. Involved in the biosynthesis of osmoregulated periplasmic glucans (OPGs). The sequence is that of Glucans biosynthesis glucosyltransferase H from Pectobacterium carotovorum subsp. carotovorum (strain PC1).